We begin with the raw amino-acid sequence, 1417 residues long: DExH-box ATP-dependent RNA helicase DExH4, chloroplastic (1417 aa).

The segment covering 1-12 (MAPTKKPQKNKQ) has biased composition (basic residues). The segment at 1–37 (MAPTKKPQKNKQSKNEIASSLIPNSGHKKPSKAPKLL) is disordered. The transit peptide at 1–61 (MAPTKKPQKN…NFRRTPSPVT (61 aa)) directs the protein to the chloroplast. Residues 607 to 781 (LQKLKEKDVL…FGQCPIITAQ (175 aa)) form the Helicase ATP-binding domain. An ATP-binding site is contributed by 620–627 (GETGSGKT). The DEIH box signature appears at 722-725 (DEVH). The Helicase C-terminal domain occupies 868–1043 (LLEELICHID…ELCLHIKLLG (176 aa)).

This sequence belongs to the DExH box helicase family.

The protein resides in the plastid. The protein localises to the chloroplast. The catalysed reaction is ATP + H2O = ADP + phosphate + H(+). This Arabidopsis thaliana (Mouse-ear cress) protein is DExH-box ATP-dependent RNA helicase DExH4, chloroplastic.